We begin with the raw amino-acid sequence, 205 residues long: MSSIYEKSIINYHLLHPKLQKRYQLDGSHTFSGTGTMSEISGGSFLVRMLLKLGVFFRCFFSERGKDIPFTIQNRTCLLKSQHTGIEWNRTFFFKGKKRFFDALMIYDEKENRILDFFGKPHLLLSVLTFEASLDGSLTITSGKQWLLICGKRIPLPKWLTGTSEVCETFDEKKNCFTIEVHVQNTILGTLFFYKGTFQEEERES.

This is an uncharacterized protein from Bacillus subtilis (strain 168).